Here is a 437-residue protein sequence, read N- to C-terminus: Eukaryotic peptide chain release factor subunit 1 (437 aa).

Alanine 2 carries the N-acetylalanine modification. Residues 61–64 (NIKS) carry the NIKS motif; plays an important role in translational termination motif. Lysine 63 carries the post-translational modification 4-hydroxylysine. Residue lysine 87 forms a Glycyl lysine isopeptide (Lys-Gly) (interchain with G-Cter in SUMO2) linkage. The residue at position 185 (glutamine 185) is an N5-methylglutamine. Threonine 347 bears the Phosphothreonine mark. Lysine 404 participates in a covalent cross-link: Glycyl lysine isopeptide (Lys-Gly) (interchain with G-Cter in SUMO2).

The protein belongs to the eukaryotic release factor 1 family. Component of the eRF1-eRF3-GTP ternary complex, composed of ETF1/ERF1 and eRF3 (GSPT1/ERF3A or GSPT2/ERF3B) and GTP. Component of the transient SURF (SMG1-UPF1-eRF1-eRF3) complex. Interacts with JMJD4. The ETF1-GSPT1 complex interacts with JMJD4. In terms of processing, hydroxylation at Lys-63 by JMJD4 promotes its translational termination efficiency. Post-translationally, methylated at Gln-185 by N6AMT1. Ubiquitinated via 'Lys-6'-linked polyubiquitin chains by RNF14 and RNF25 in response to ribosome collisions (ribosome stalling), leading to its degradation by the proteasome and rescue of stalled ribosomes.

The protein localises to the cytoplasm. Component of the eRF1-eRF3-GTP ternary complex, a ternary complex that mediates translation termination in response to the termination codons. The eRF1-eRF3-GTP complex binds to a stop codon in the ribosomal A-site. ETF1/ERF1 is responsible for stop codon recognition and inducing hydrolysis of peptidyl-tRNA. Following GTP hydrolysis, eRF3 (GSPT1/ERF3A or GSPT2/ERF3B) dissociates, permitting ETF1/eRF1 to accommodate fully in the A-site, followed by hydrolysis of peptidyl-tRNA. Component of the transient SURF complex which recruits UPF1 to stalled ribosomes in the context of nonsense-mediated decay (NMD) of mRNAs containing premature stop codons. Required for SHFL-mediated translation termination which inhibits programmed ribosomal frameshifting (-1PRF) of mRNA from viruses and cellular genes. In Pongo abelii (Sumatran orangutan), this protein is Eukaryotic peptide chain release factor subunit 1 (ETF1).